The following is a 481-amino-acid chain: Proline--tRNA ligase (481 aa).

The protein belongs to the class-II aminoacyl-tRNA synthetase family. ProS type 3 subfamily. Homodimer.

The protein resides in the cytoplasm. The catalysed reaction is tRNA(Pro) + L-proline + ATP = L-prolyl-tRNA(Pro) + AMP + diphosphate. Its function is as follows. Catalyzes the attachment of proline to tRNA(Pro) in a two-step reaction: proline is first activated by ATP to form Pro-AMP and then transferred to the acceptor end of tRNA(Pro). The chain is Proline--tRNA ligase from Chlorobaculum tepidum (strain ATCC 49652 / DSM 12025 / NBRC 103806 / TLS) (Chlorobium tepidum).